The primary structure comprises 367 residues: tRNA-specific 2-thiouridylase MnmA (367 aa).

ATP is bound by residues 12-19 and M38; that span reads GMSGGVDS. Positions 98 to 100 are interaction with target base in tRNA; that stretch reads NPD. The active-site Nucleophile is the C103. A disulfide bridge connects residues C103 and C200. ATP is bound at residue G128. Positions 150-152 are interaction with tRNA; it reads KDQ. The active-site Cysteine persulfide intermediate is the C200. Positions 312–313 are interaction with tRNA; the sequence is RY.

It belongs to the MnmA/TRMU family. As to quaternary structure, interacts with TusE.

Its subcellular location is the cytoplasm. It catalyses the reaction S-sulfanyl-L-cysteinyl-[protein] + uridine(34) in tRNA + AH2 + ATP = 2-thiouridine(34) in tRNA + L-cysteinyl-[protein] + A + AMP + diphosphate + H(+). In terms of biological role, catalyzes the 2-thiolation of uridine at the wobble position (U34) of tRNA(Lys), tRNA(Glu) and tRNA(Gln), leading to the formation of s(2)U34, the first step of tRNA-mnm(5)s(2)U34 synthesis. Sulfur is provided by IscS, via a sulfur-relay system. Binds ATP and its substrate tRNAs. The polypeptide is tRNA-specific 2-thiouridylase MnmA (Proteus mirabilis (strain HI4320)).